The sequence spans 601 residues: Elongation factor 4 (601 aa).

The tr-type G domain maps to 8–189; it reads EQIRNFGIIA…LIVRKAPPPK (182 aa). 20 to 25 lines the GTP pocket; that stretch reads DHGKST.

It belongs to the TRAFAC class translation factor GTPase superfamily. Classic translation factor GTPase family. LepA subfamily.

The protein resides in the cell membrane. The enzyme catalyses GTP + H2O = GDP + phosphate + H(+). Required for accurate and efficient protein synthesis under certain stress conditions. May act as a fidelity factor of the translation reaction, by catalyzing a one-codon backward translocation of tRNAs on improperly translocated ribosomes. Back-translocation proceeds from a post-translocation (POST) complex to a pre-translocation (PRE) complex, thus giving elongation factor G a second chance to translocate the tRNAs correctly. Binds to ribosomes in a GTP-dependent manner. The polypeptide is Elongation factor 4 (Tropheryma whipplei (strain Twist) (Whipple's bacillus)).